The sequence spans 331 residues: Probable allantoicase (331 aa).

The protein belongs to the allantoicase family.

It carries out the reaction allantoate + H2O = (S)-ureidoglycolate + urea. The protein operates within nitrogen metabolism; (S)-allantoin degradation; (S)-ureidoglycolate from allantoate (aminidohydrolase route): step 1/1. This chain is Probable allantoicase, found in Pseudomonas syringae pv. syringae (strain B728a).